Here is a 324-residue protein sequence, read N- to C-terminus: Glycerol-3-phosphate dehydrogenase [NAD(P)+] (324 aa).

NADPH-binding residues include Trp15, Arg35, and Lys101. Sn-glycerol 3-phosphate-binding residues include Lys101 and Gly129. An NADPH-binding site is contributed by Ala133. The sn-glycerol 3-phosphate site is built by Lys184, Asp237, Ser247, Arg248, and Asn249. Residue Lys184 is the Proton acceptor of the active site. Residue Arg248 participates in NADPH binding. Positions 272 and 274 each coordinate NADPH.

The protein belongs to the NAD-dependent glycerol-3-phosphate dehydrogenase family.

The protein localises to the cytoplasm. The enzyme catalyses sn-glycerol 3-phosphate + NAD(+) = dihydroxyacetone phosphate + NADH + H(+). The catalysed reaction is sn-glycerol 3-phosphate + NADP(+) = dihydroxyacetone phosphate + NADPH + H(+). It participates in membrane lipid metabolism; glycerophospholipid metabolism. Catalyzes the reduction of the glycolytic intermediate dihydroxyacetone phosphate (DHAP) to sn-glycerol 3-phosphate (G3P), the key precursor for phospholipid synthesis. This chain is Glycerol-3-phosphate dehydrogenase [NAD(P)+], found in Gluconobacter oxydans (strain 621H) (Gluconobacter suboxydans).